A 150-amino-acid chain; its full sequence is Viral late gene transcription factor 2 (150 aa).

The protein belongs to the chordopoxvirinae VLTF-2 family. As to quaternary structure, interacts with itself. Interacts with the late transcription factors VLTF-1.

In terms of biological role, acts with RNA polymerase to initiate transcription from late gene promoters. The sequence is that of Viral late gene transcription factor 2 (VLTF2) from Homo sapiens (Human).